The following is a 147-amino-acid chain: UPF0260 protein PMI1174 (147 aa).

Belongs to the UPF0260 family.

The sequence is that of UPF0260 protein PMI1174 from Proteus mirabilis (strain HI4320).